A 259-amino-acid polypeptide reads, in one-letter code: Type III pantothenate kinase (259 aa).

6–13 (DVGNTNIV) serves as a coordination point for ATP. Substrate-binding positions include Y100 and 107–110 (GADR). D109 serves as the catalytic Proton acceptor. D129 serves as a coordination point for K(+). An ATP-binding site is contributed by T132. T184 contributes to the substrate binding site.

The protein belongs to the type III pantothenate kinase family. Homodimer. The cofactor is NH4(+). K(+) serves as cofactor.

The protein localises to the cytoplasm. The enzyme catalyses (R)-pantothenate + ATP = (R)-4'-phosphopantothenate + ADP + H(+). It functions in the pathway cofactor biosynthesis; coenzyme A biosynthesis; CoA from (R)-pantothenate: step 1/5. In terms of biological role, catalyzes the phosphorylation of pantothenate (Pan), the first step in CoA biosynthesis. The chain is Type III pantothenate kinase from Clostridium kluyveri (strain NBRC 12016).